Consider the following 81-residue polypeptide: Photosystem I iron-sulfur center (81 aa).

4Fe-4S ferredoxin-type domains follow at residues 2–31 (SHAV…MVPW) and 37–68 (GQIA…IRVY). Residues C11, C14, C17, C21, C48, C51, C54, and C58 each coordinate [4Fe-4S] cluster.

As to quaternary structure, the cyanobacterial PSI reaction center is composed of one copy each of PsaA,B,C,D,E,F,I,J,K,L,M and X, and forms trimeric complexes. [4Fe-4S] cluster serves as cofactor.

Its subcellular location is the cellular thylakoid membrane. The catalysed reaction is reduced [plastocyanin] + hnu + oxidized [2Fe-2S]-[ferredoxin] = oxidized [plastocyanin] + reduced [2Fe-2S]-[ferredoxin]. In terms of biological role, apoprotein for the two 4Fe-4S centers FA and FB of photosystem I (PSI); essential for photochemical activity. FB is the terminal electron acceptor of PSI, donating electrons to ferredoxin. The C-terminus interacts with PsaA/B/D and helps assemble the protein into the PSI complex. Required for binding of PsaD and PsaE to PSI. PSI is a plastocyanin/cytochrome c6-ferredoxin oxidoreductase, converting photonic excitation into a charge separation, which transfers an electron from the donor P700 chlorophyll pair to the spectroscopically characterized acceptors A0, A1, FX, FA and FB in turn. The protein is Photosystem I iron-sulfur center of Synechococcus sp. (strain WH7803).